The following is a 234-amino-acid chain: 1-(5-phosphoribosyl)-5-[(5-phosphoribosylamino)methylideneamino] imidazole-4-carboxamide isomerase (234 aa).

Asp-9 functions as the Proton acceptor in the catalytic mechanism. Catalysis depends on Asp-131, which acts as the Proton donor.

It belongs to the HisA/HisF family.

Its subcellular location is the cytoplasm. It carries out the reaction 1-(5-phospho-beta-D-ribosyl)-5-[(5-phospho-beta-D-ribosylamino)methylideneamino]imidazole-4-carboxamide = 5-[(5-phospho-1-deoxy-D-ribulos-1-ylimino)methylamino]-1-(5-phospho-beta-D-ribosyl)imidazole-4-carboxamide. The protein operates within amino-acid biosynthesis; L-histidine biosynthesis; L-histidine from 5-phospho-alpha-D-ribose 1-diphosphate: step 4/9. The chain is 1-(5-phosphoribosyl)-5-[(5-phosphoribosylamino)methylideneamino] imidazole-4-carboxamide isomerase from Staphylococcus aureus (strain bovine RF122 / ET3-1).